A 233-amino-acid polypeptide reads, in one-letter code: Purine nucleoside phosphorylase DeoD-type (233 aa).

His-4 provides a ligand contact to a purine D-ribonucleoside. Residues Gly-20, Arg-24, Arg-43, and Arg-87–Thr-90 contribute to the phosphate site. A purine D-ribonucleoside is bound by residues Glu-179 to Glu-181 and Ser-203 to Asp-204. Asp-204 functions as the Proton donor in the catalytic mechanism.

It belongs to the PNP/UDP phosphorylase family. In terms of assembly, homohexamer; trimer of homodimers.

The enzyme catalyses a purine D-ribonucleoside + phosphate = a purine nucleobase + alpha-D-ribose 1-phosphate. It carries out the reaction a purine 2'-deoxy-D-ribonucleoside + phosphate = a purine nucleobase + 2-deoxy-alpha-D-ribose 1-phosphate. Functionally, catalyzes the reversible phosphorolytic breakdown of the N-glycosidic bond in the beta-(deoxy)ribonucleoside molecules, with the formation of the corresponding free purine bases and pentose-1-phosphate. The polypeptide is Purine nucleoside phosphorylase DeoD-type (Helicobacter pylori (strain HPAG1)).